Reading from the N-terminus, the 505-residue chain is Lysine--tRNA ligase (505 aa).

Mg(2+) contacts are provided by Glu403 and Glu410.

It belongs to the class-II aminoacyl-tRNA synthetase family. In terms of assembly, homodimer. Mg(2+) serves as cofactor.

It localises to the cytoplasm. It catalyses the reaction tRNA(Lys) + L-lysine + ATP = L-lysyl-tRNA(Lys) + AMP + diphosphate. The sequence is that of Lysine--tRNA ligase from Methanospirillum hungatei JF-1 (strain ATCC 27890 / DSM 864 / NBRC 100397 / JF-1).